A 328-amino-acid polypeptide reads, in one-letter code: Alanine racemase (328 aa).

Lys33 functions as the Proton acceptor; specific for D-alanine in the catalytic mechanism. Residue Lys33 is modified to N6-(pyridoxal phosphate)lysine. A substrate-binding site is contributed by Arg118. Residue Tyr237 is the Proton acceptor; specific for L-alanine of the active site. Position 283 (Met283) interacts with substrate.

This sequence belongs to the alanine racemase family. Pyridoxal 5'-phosphate is required as a cofactor.

It catalyses the reaction L-alanine = D-alanine. It functions in the pathway amino-acid biosynthesis; D-alanine biosynthesis; D-alanine from L-alanine: step 1/1. Catalyzes the interconversion of L-alanine and D-alanine. May also act on other amino acids. In Campylobacter jejuni subsp. doylei (strain ATCC BAA-1458 / RM4099 / 269.97), this protein is Alanine racemase (alr).